The sequence spans 292 residues: Bifunctional protein FolD 2 (292 aa).

NADP(+) is bound by residues 166–168 (GHS) and Ile-232.

The protein belongs to the tetrahydrofolate dehydrogenase/cyclohydrolase family. Homodimer.

It catalyses the reaction (6R)-5,10-methylene-5,6,7,8-tetrahydrofolate + NADP(+) = (6R)-5,10-methenyltetrahydrofolate + NADPH. The catalysed reaction is (6R)-5,10-methenyltetrahydrofolate + H2O = (6R)-10-formyltetrahydrofolate + H(+). It participates in one-carbon metabolism; tetrahydrofolate interconversion. Catalyzes the oxidation of 5,10-methylenetetrahydrofolate to 5,10-methenyltetrahydrofolate and then the hydrolysis of 5,10-methenyltetrahydrofolate to 10-formyltetrahydrofolate. This Ruegeria pomeroyi (strain ATCC 700808 / DSM 15171 / DSS-3) (Silicibacter pomeroyi) protein is Bifunctional protein FolD 2.